Consider the following 224-residue polypeptide: MTDDSVPPPSYEEVLRQEGVIDSPNSSNGQTSTSAGHPSSSSSTLPNYAASSLNSRPVSSSGSGNAYSQAPYPPARPTSQRPNSWQPGNASTMYASPPPSSNYNTAKPPYQTSQFYARPQSSYAPPPSGRPRISYPYPPGYMCYKCHNTGYKDSGRPCGRCARRFGRSYDVQFSRPPPGALVVYPGDPRIPGRVCGNCKGSGQLDFIFFTEICPVCNGVGKIPY.

The span at 1–10 (MTDDSVPPPS) shows a compositional bias: pro residues. A disordered region spans residues 1–110 (MTDDSVPPPS…SNYNTAKPPY (110 aa)). Over residues 31 to 52 (TSTSAGHPSSSSSTLPNYAASS) the composition is skewed to low complexity. Polar residues-rich tracts occupy residues 53 to 68 (LNSR…NAYS), 77 to 94 (PTSQ…STMY), and 101 to 110 (SNYNTAKPPY).

Belongs to the HUA1 family.

The protein localises to the cytoplasm. Its function is as follows. May be involved in assembly and disassembly of the actin cytoskeleton. This is Proline/serine-rich protein C17A5.10 from Schizosaccharomyces pombe (strain 972 / ATCC 24843) (Fission yeast).